Here is a 126-residue protein sequence, read N- to C-terminus: uncharacterized protein (126 aa).

3 helical membrane passes run 4-24, 42-62, and 64-84; these read LIIA…VNIL, AITI…IINP, and ISAS…SYTV.

It localises to the membrane. This is an uncharacterized protein from Saccharomyces cerevisiae (strain ATCC 204508 / S288c) (Baker's yeast).